Here is a 297-residue protein sequence, read N- to C-terminus: HTH-type transcriptional regulator ArgP (297 aa).

Positions 4 to 60 (PDYRTLQALDAVIRERGFERAAQKLCITQSAVSQRIKQLENLFGQPLLVRTIPPRPT) constitute an HTH lysR-type domain. The segment at residues 21–40 (FERAAQKLCITQSAVSQRIK) is a DNA-binding region (H-T-H motif).

It belongs to the LysR transcriptional regulatory family. Homodimer.

Its function is as follows. Controls the transcription of genes involved in arginine and lysine metabolism. The chain is HTH-type transcriptional regulator ArgP from Pectobacterium atrosepticum (strain SCRI 1043 / ATCC BAA-672) (Erwinia carotovora subsp. atroseptica).